The following is a 327-amino-acid chain: GMP reductase (327 aa).

Catalysis depends on Cys175, which acts as the Thioimidate intermediate. 204–227 (IIADGGIRTHGDIAKSIRFGASMV) is a binding site for NADP(+).

This sequence belongs to the IMPDH/GMPR family. GuaC type 2 subfamily.

The enzyme catalyses IMP + NH4(+) + NADP(+) = GMP + NADPH + 2 H(+). Functionally, catalyzes the irreversible NADPH-dependent deamination of GMP to IMP. It functions in the conversion of nucleobase, nucleoside and nucleotide derivatives of G to A nucleotides, and in maintaining the intracellular balance of A and G nucleotides. The sequence is that of GMP reductase from Exiguobacterium sp. (strain ATCC BAA-1283 / AT1b).